Here is a 640-residue protein sequence, read N- to C-terminus: MSRVIGIDLGTTNSCVAVMEGGEPVVIANAEGSRTTPSMIAFAESGERLVGQQAKRQAVTNPENTLYAIKRLIGRKFDTEAVKKDIAISPFKIVKADNSDAWVEVRGQKYSPPEISAMVLQKMKKTAEDYLGETVTDAVITVPAYFDDSQRQATKDAGKIAGLNVLRIINEPTAAALAYGLDKKKDEKIAVFDLGGGTFDVSILELGEGVFEVKSTNGDTFLGGEDFDQKIIDHIADEFKKDQGIDLRGDKMALQRLKEAGEKAKCELSTSLETDINLPFITADASGPKHLTMKLTRAKLESICAELIANLEGPCRTALKDAGLSASDIDEVILVGGMTRMPIVQKKVQDIFGKVPNRGVNPDEVVAIGAAIQGGVLRGDVKDVLLLDVTPLSLGIETLGGVLTKLIDKNSTIPCRKSQVFSTAADNQPAVSIHVLQGEREMAADNKTLGNFELSGIPSAPRGVPQIEVTFDIDANGIVHVSAKDLGTGKEQSIRITASSGLSKEEVEKMVREAEAHAADDKKKRELIEAKNQADNLIYQTEKSLTEFGDKIDASEKQKIEEGVAALKKALEGSDADEIKKASDSLMQASHKLAEAVYAKTQGAGAEGSEQPHGEQEAGGAAKGETVVDADFEEVKDDKK.

Thr198 carries the phosphothreonine; by autocatalysis modification. The tract at residues Lys600–Lys640 is disordered. The span at Val628–Lys640 shows a compositional bias: acidic residues.

This sequence belongs to the heat shock protein 70 family.

Acts as a chaperone. The sequence is that of Chaperone protein DnaK from Geobacter sp. (strain M21).